Here is a 127-residue protein sequence, read N- to C-terminus: Small ribosomal subunit protein uS11 (127 aa).

This sequence belongs to the universal ribosomal protein uS11 family. In terms of assembly, part of the 30S ribosomal subunit. Interacts with proteins S7 and S18. Binds to IF-3.

Its function is as follows. Located on the platform of the 30S subunit, it bridges several disparate RNA helices of the 16S rRNA. Forms part of the Shine-Dalgarno cleft in the 70S ribosome. This is Small ribosomal subunit protein uS11 from Streptococcus gordonii (strain Challis / ATCC 35105 / BCRC 15272 / CH1 / DL1 / V288).